Consider the following 397-residue polypeptide: Carbamoyl phosphate synthase small chain (397 aa).

Positions 1–204 are CPSase; sequence MKHVLRKEKT…NAKLKEKIWH (204 aa). The L-glutamine site is built by S57, G252, and G254. One can recognise a Glutamine amidotransferase type-1 domain in the interval 204–391; sequence HVVVYDFGVK…IKLMKKSYNS (188 aa). C280 serves as the catalytic Nucleophile. L281, Q284, N322, and Y325 together coordinate L-glutamine. Residues H364 and E366 contribute to the active site.

The protein belongs to the CarA family. In terms of assembly, composed of two chains; the small (or glutamine) chain promotes the hydrolysis of glutamine to ammonia, which is used by the large (or ammonia) chain to synthesize carbamoyl phosphate. Tetramer of heterodimers (alpha,beta)4.

The catalysed reaction is hydrogencarbonate + L-glutamine + 2 ATP + H2O = carbamoyl phosphate + L-glutamate + 2 ADP + phosphate + 2 H(+). It catalyses the reaction L-glutamine + H2O = L-glutamate + NH4(+). The protein operates within amino-acid biosynthesis; L-arginine biosynthesis; carbamoyl phosphate from bicarbonate: step 1/1. It participates in pyrimidine metabolism; UMP biosynthesis via de novo pathway; (S)-dihydroorotate from bicarbonate: step 1/3. Its function is as follows. Small subunit of the glutamine-dependent carbamoyl phosphate synthetase (CPSase). CPSase catalyzes the formation of carbamoyl phosphate from the ammonia moiety of glutamine, carbonate, and phosphate donated by ATP, constituting the first step of 2 biosynthetic pathways, one leading to arginine and/or urea and the other to pyrimidine nucleotides. The small subunit (glutamine amidotransferase) binds and cleaves glutamine to supply the large subunit with the substrate ammonia. The chain is Carbamoyl phosphate synthase small chain from Buchnera aphidicola subsp. Baizongia pistaciae (strain Bp).